The following is a 262-amino-acid chain: MIHPSAKIHPTAIVEEGAKIGENVIIGPFCLIGADVDIGKGTVLHSHIVVKGITRIGEDNQIYQFASIGEANQDLKYNGEPTKTIIGDRNRIRESVTIHRGTVQGGGVTRIGDDNLFMINSHIAHDCIIKNRCILANNATLAGHVQLDDFVIVGGMSAIHQFVVVGAHVMLGGGSMVSQDVPPYVMAQGNHARPFGVNIEGLKRRGFDKPTLHAIRNVYKLIYRSDKTLDEVLPEIEQVAQKDSSISFFVEFFKRSTRGIIR.

It belongs to the transferase hexapeptide repeat family. LpxA subfamily. Homotrimer.

It localises to the cytoplasm. It catalyses the reaction a (3R)-hydroxyacyl-[ACP] + UDP-N-acetyl-alpha-D-glucosamine = a UDP-3-O-[(3R)-3-hydroxyacyl]-N-acetyl-alpha-D-glucosamine + holo-[ACP]. The protein operates within glycolipid biosynthesis; lipid IV(A) biosynthesis; lipid IV(A) from (3R)-3-hydroxytetradecanoyl-[acyl-carrier-protein] and UDP-N-acetyl-alpha-D-glucosamine: step 1/6. Involved in the biosynthesis of lipid A, a phosphorylated glycolipid that anchors the lipopolysaccharide to the outer membrane of the cell. In Mannheimia succiniciproducens (strain KCTC 0769BP / MBEL55E), this protein is Acyl-[acyl-carrier-protein]--UDP-N-acetylglucosamine O-acyltransferase.